We begin with the raw amino-acid sequence, 99 residues long: Pterin-4-alpha-carbinolamine dehydratase (99 aa).

This sequence belongs to the pterin-4-alpha-carbinolamine dehydratase family.

The catalysed reaction is (4aS,6R)-4a-hydroxy-L-erythro-5,6,7,8-tetrahydrobiopterin = (6R)-L-erythro-6,7-dihydrobiopterin + H2O. In terms of biological role, involved in tetrahydrobiopterin biosynthesis. This chain is Pterin-4-alpha-carbinolamine dehydratase (pcbd), found in Dictyostelium discoideum (Social amoeba).